A 1074-amino-acid chain; its full sequence is ADAMTS-like protein 4 (1074 aa).

The signal sequence occupies residues 1-24 (MENWTGRPWLYLLLLLSLPQLCLD). The region spanning 48–93 (GPWVQWASCSQPCGVGVQRRSRTCQLPTVQLHPSLPLPPRPPRHPE) is the TSP type-1 1 domain. Residues 77–342 (QLHPSLPLPP…QHPGAWLPLL (266 aa)) are disordered. Polar residues predominate over residues 103–119 (RPQTSPETLPLYRTQSR). Residues 132 to 152 (LGREETQEIRAARRSRLRDPI) show a composition bias toward basic and acidic residues. The segment covering 206 to 226 (ANGSPQTELPPTELSVHTPSP) has biased composition (polar residues). The span at 310 to 323 (GQQGQGPWGTGGTP) shows a compositional bias: gly residues. Residue N490 is glycosylated (N-linked (GlcNAc...) (complex) asparagine). 5 consecutive TSP type-1 domains span residues 723 to 782 (CPPY…QLRL), 783 to 842 (CGHW…GPCT), 845 to 909 (WFHS…GPCE), 910 to 969 (RTWR…QGQA), and 970 to 1026 (CQDR…QPCS). N-linked (GlcNAc...) asparagine glycosylation occurs at N773. Residues 1029 to 1066 (PDDQCKDSSPHCPLVVQARLCVYPYYTATCCRSCAHVL) enclose the PLAC domain.

Interacts with CTSB. Interacts with FBN1. N-glycosylated. Can be O-fucosylated by POFUT2 on a serine or a threonine residue found within the consensus sequence C1-X(2)-(S/T)-C2-G of the TSP type-1 repeat domains where C1 and C2 are the first and second cysteine residue of the repeat, respectively. Fucosylated repeats can then be further glycosylated by the addition of a beta-1,3-glucose residue by the glucosyltransferase, B3GALTL. Fucosylation mediates the efficient secretion of ADAMTS family members. Can also be C-glycosylated with one or two mannose molecules on tryptophan residues within the consensus sequence W-X-X-W of the TPRs. N- and C-glycosylations can also facilitate secretion. Expressed in colon, heart, leukocyte, liver, lung, skeletal muscle, spleen, testis and placenta. Weaker expression in bone marrow, brain tissue, kidney and pancreas. Expression studies in fetal tissues reveal strong expression in heart, kidney, liver, lung and skeletal muscle, but weaker expression in fetal brain and skin.

The protein resides in the secreted. Its subcellular location is the extracellular space. The protein localises to the extracellular matrix. Functionally, positive regulation of apoptosis. May facilitate FBN1 microfibril biogenesis. The chain is ADAMTS-like protein 4 (ADAMTSL4) from Homo sapiens (Human).